Consider the following 157-residue polypeptide: 3-dehydroquinate dehydratase (157 aa).

Tyr24 (proton acceptor) is an active-site residue. Substrate is bound by residues Asn75, His81, and Asp88. His101 acts as the Proton donor in catalysis. Substrate is bound by residues 102–103 (LS) and Arg112.

It belongs to the type-II 3-dehydroquinase family. Homododecamer.

The catalysed reaction is 3-dehydroquinate = 3-dehydroshikimate + H2O. Its pathway is metabolic intermediate biosynthesis; chorismate biosynthesis; chorismate from D-erythrose 4-phosphate and phosphoenolpyruvate: step 3/7. Catalyzes a trans-dehydration via an enolate intermediate. This chain is 3-dehydroquinate dehydratase, found in Brucella abortus (strain S19).